The following is a 284-amino-acid chain: Diaminopimelate epimerase (284 aa).

3 residues coordinate substrate: asparagine 20, glutamine 53, and asparagine 73. The active-site Proton donor is cysteine 82. Substrate is bound by residues 83 to 84 (GN), asparagine 167, asparagine 200, and 218 to 219 (ER). Cysteine 227 serves as the catalytic Proton acceptor. Residue 228–229 (GS) coordinates substrate.

The protein belongs to the diaminopimelate epimerase family. Homodimer.

The protein localises to the cytoplasm. It carries out the reaction (2S,6S)-2,6-diaminopimelate = meso-2,6-diaminopimelate. Its pathway is amino-acid biosynthesis; L-lysine biosynthesis via DAP pathway; DL-2,6-diaminopimelate from LL-2,6-diaminopimelate: step 1/1. Functionally, catalyzes the stereoinversion of LL-2,6-diaminopimelate (L,L-DAP) to meso-diaminopimelate (meso-DAP), a precursor of L-lysine and an essential component of the bacterial peptidoglycan. In Xanthomonas campestris pv. campestris (strain ATCC 33913 / DSM 3586 / NCPPB 528 / LMG 568 / P 25), this protein is Diaminopimelate epimerase.